The primary structure comprises 635 residues: MSRIIGIDLGTTNSCVAIMDGGNVKIIENSEGDRTTPSIIAYPKDSEEVLVGQPAKRQAVTNPENTLYAIKRLIGRRFDEDAVQKDINLVPYKIVKVDNGDAWVEVKGKKMAAPEISAKVIGKMKKTAEDYLGEEVTEAVITVPAYFNDSQRQATKDAGKIAGLNVKRIINEPTAAALAYGVDKVKGNKTIAVYDLGGGTFDVSIIEMEDIDGEKHFEVLSTNGDTFLGGEDFDQRIIGYLVDEFKRDQGVDLTNDPMALQRLKEAAEKAKIELSSSEQTDVNLPYVTADASGPKHLNIKITRAKLELLVEDLLKRTIEPCKTALKDADLSASDIDEVILVGGQTRMPKVTKMVQDFFGKEPKKDVNPDEAVAMGAAIQAGVLGGDVKDVLLLDVTPLSLGIETMGGIMTKLIEKNTTIPTNASQIFSTAVDNQSAVTVHVLQGERNMSSANKSLGQFNLEGIPNAPKGQPQVEVTFDIDSDGILDVSAKDKNTGKEQSITIKASSGLSDEEVEKMIKDAEAHADEDKKFQELVASKNMADSLIHSTKKTLEELKNEVSDDEKSVIEMAITELEKAIKNDDKKAIDAKIQTLSKKAQPLTEKVQAKSSAENTSKEKSKADDDVVDADFEEVKDDK.

Threonine 200 is modified (phosphothreonine; by autocatalysis). The tract at residues 595–635 (KAQPLTEKVQAKSSAENTSKEKSKADDDVVDADFEEVKDDK) is disordered. Basic and acidic residues predominate over residues 612-621 (TSKEKSKADD). The segment covering 622–635 (DVVDADFEEVKDDK) has biased composition (acidic residues).

This sequence belongs to the heat shock protein 70 family.

Functionally, acts as a chaperone. This is Chaperone protein DnaK from Ruthia magnifica subsp. Calyptogena magnifica.